A 174-amino-acid chain; its full sequence is Gamma-crystallin A (174 aa).

Beta/gamma crystallin 'Greek key' domains follow at residues 2–40 (GKIT…RVDS) and 41–83 (GCWM…RIIP). The interval 84 to 87 (HTSS) is connecting peptide. Beta/gamma crystallin 'Greek key' domains follow at residues 88 to 128 (HKLR…HVLE) and 129 to 171 (GCWV…RRVT).

The protein belongs to the beta/gamma-crystallin family. Monomer.

Its function is as follows. Crystallins are the dominant structural components of the vertebrate eye lens. This chain is Gamma-crystallin A (CRYGA), found in Homo sapiens (Human).